The sequence spans 427 residues: ATP-sensitive inward rectifier potassium channel 12 (427 aa).

At 1–77 the chain is on the cytoplasmic side; sequence MTAASRANPY…LADMFTTCVD (77 aa). At C75 the chain carries S-nitrosocysteine. The helical transmembrane segment at 78-104 threads the bilayer; it reads IRWRYMLLIFSLAFLASWLLFGIIFWV. A 1,2-diacyl-sn-glycero-3-phospho-(1D-myo-inositol-4,5-bisphosphate) contacts are provided by R79 and R81. The Extracellular portion of the chain corresponds to 105-129; it reads IAVAHGDLEPAEGRGRTPCVLQVHG. Cysteines 123 and 155 form a disulfide. Residues 130 to 146 constitute an intramembrane region (helical; Pore-forming); the sequence is FMAAFLFSIETQTTIGY. K(+)-binding residues include T143, I144, G145, and Y146. A Selectivity filter motif is present at residues 143-148; that stretch reads TIGYGL. The Extracellular segment spans residues 147-155; that stretch reads GLRCVTEEC. The chain crosses the membrane as a helical span at residues 156-183; the sequence is PVAVFMVVAQSIVGCIIDSFMIGAIMAK. Residues K183 and K188 each contribute to the a 1,2-diacyl-sn-glycero-3-phospho-(1D-myo-inositol-4,5-bisphosphate) site. Topologically, residues 184 to 427 are cytoplasmic; sequence MARPKKRAQT…ERPYRRESEI (244 aa). Residues 387 to 427 are disordered; it reads DEEDEVATDRDGRSPQPEHDFDRLQASSAALERPYRRESEI. The segment covering 393–409 has biased composition (basic and acidic residues); it reads ATDRDGRSPQPEHDFDR. The PDZ-binding signature appears at 425 to 427; that stretch reads SEI.

It belongs to the inward rectifier-type potassium channel (TC 1.A.2.1) family. KCNJ12 subfamily. In terms of assembly, homotetramer. Forms heteromer with KCNJ4. Can form heteromeric channels with Kir2.6/KCNJ18. Association, via its PDZ-recognition domain, with LIN7A, LIN7B, LIN7C, DLG1, CASK and APBA1 plays a key role in its localization and trafficking. Highest level in cerebellum.

It is found in the membrane. It localises to the cell membrane. The protein resides in the sarcolemma. Its subcellular location is the T-tubule. The enzyme catalyses K(+)(in) = K(+)(out). Its activity is regulated as follows. Activated by phosphatidylinositol 4,5-biphosphate (PtdIns(4,5)P2). PtdIns(4,5)P2 binding to the cytoplasmic side of the channel triggers a conformation change leading to channel opening. Inhibited by Ba(2+). Inward rectifying potassium channel that probably participates in controlling the resting membrane potential in electrically excitable cells. It probably participates in establishing action potential waveform and excitability of neuronal and muscle tissues. Inward rectifier potassium channels are characterized by a greater tendency to allow potassium to flow into the cell rather than out of it. Their voltage dependence is regulated by the concentration of extracellular potassium; as external potassium is raised, the voltage range of the channel opening shifts to more positive voltages. The inward rectification is mainly due to the blockage of outward current by internal magnesium. This chain is ATP-sensitive inward rectifier potassium channel 12 (Kcnj12), found in Mus musculus (Mouse).